The chain runs to 457 residues: Bifunctional protein GlmU (457 aa).

The tract at residues 1-229 (MYNCAIILAA…YEEIMGVNSR (229 aa)) is pyrophosphorylase. Residues 8–11 (LAAG), Lys-22, Gln-73, and 78–79 (GT) each bind UDP-N-acetyl-alpha-D-glucosamine. Position 103 (Asp-103) interacts with Mg(2+). UDP-N-acetyl-alpha-D-glucosamine-binding residues include Gly-140, Glu-155, Asn-170, and Asn-227. Mg(2+) is bound at residue Asn-227. Positions 230–250 (VQLSEAEIVMRKRINHKHMVN) are linker. The N-acetyltransferase stretch occupies residues 251 to 457 (GVTFIDCEST…WLDKKGLLKK (207 aa)). 2 residues coordinate UDP-N-acetyl-alpha-D-glucosamine: Arg-332 and Lys-350. His-362 functions as the Proton acceptor in the catalytic mechanism. Tyr-365 and Asn-376 together coordinate UDP-N-acetyl-alpha-D-glucosamine. Acetyl-CoA is bound by residues 385 to 386 (NY), Ala-422, and Arg-439.

The protein in the N-terminal section; belongs to the N-acetylglucosamine-1-phosphate uridyltransferase family. It in the C-terminal section; belongs to the transferase hexapeptide repeat family. Homotrimer. Requires Mg(2+) as cofactor.

The protein localises to the cytoplasm. It carries out the reaction alpha-D-glucosamine 1-phosphate + acetyl-CoA = N-acetyl-alpha-D-glucosamine 1-phosphate + CoA + H(+). The catalysed reaction is N-acetyl-alpha-D-glucosamine 1-phosphate + UTP + H(+) = UDP-N-acetyl-alpha-D-glucosamine + diphosphate. The protein operates within nucleotide-sugar biosynthesis; UDP-N-acetyl-alpha-D-glucosamine biosynthesis; N-acetyl-alpha-D-glucosamine 1-phosphate from alpha-D-glucosamine 6-phosphate (route II): step 2/2. It functions in the pathway nucleotide-sugar biosynthesis; UDP-N-acetyl-alpha-D-glucosamine biosynthesis; UDP-N-acetyl-alpha-D-glucosamine from N-acetyl-alpha-D-glucosamine 1-phosphate: step 1/1. It participates in bacterial outer membrane biogenesis; LPS lipid A biosynthesis. In terms of biological role, catalyzes the last two sequential reactions in the de novo biosynthetic pathway for UDP-N-acetylglucosamine (UDP-GlcNAc). The C-terminal domain catalyzes the transfer of acetyl group from acetyl coenzyme A to glucosamine-1-phosphate (GlcN-1-P) to produce N-acetylglucosamine-1-phosphate (GlcNAc-1-P), which is converted into UDP-GlcNAc by the transfer of uridine 5-monophosphate (from uridine 5-triphosphate), a reaction catalyzed by the N-terminal domain. This Clostridium botulinum (strain Kyoto / Type A2) protein is Bifunctional protein GlmU.